Consider the following 40-residue polypeptide: Plasma membrane ATPase proteolipid 1 (40 aa).

Residues 1 to 2 constitute a propeptide that is removed on maturation; sequence MT. The chain crosses the membrane as a helical span at residues 3–26; that stretch reads LPGGVILVFILVGLACIAIIATII. The Cytoplasmic portion of the chain corresponds to 27 to 40; that stretch reads YRKWQARQRGLQRF.

In terms of assembly, monomer and homodimer. Associated with the 100 kDa subunit of the plasma membrane H(+)-ATPase.

Its subcellular location is the cell membrane. In Saccharomyces cerevisiae (strain ATCC 204508 / S288c) (Baker's yeast), this protein is Plasma membrane ATPase proteolipid 1 (PMP1).